A 311-amino-acid chain; its full sequence is 4-diphosphocytidyl-2-C-methyl-D-erythritol kinase (311 aa).

The active site involves Lys-16. 100-110 serves as a coordination point for ATP; it reads PIGAGLAGGSS. Asp-142 is a catalytic residue.

It belongs to the GHMP kinase family. IspE subfamily.

It carries out the reaction 4-CDP-2-C-methyl-D-erythritol + ATP = 4-CDP-2-C-methyl-D-erythritol 2-phosphate + ADP + H(+). Its pathway is isoprenoid biosynthesis; isopentenyl diphosphate biosynthesis via DXP pathway; isopentenyl diphosphate from 1-deoxy-D-xylulose 5-phosphate: step 3/6. Its function is as follows. Catalyzes the phosphorylation of the position 2 hydroxy group of 4-diphosphocytidyl-2C-methyl-D-erythritol. This chain is 4-diphosphocytidyl-2-C-methyl-D-erythritol kinase, found in Prochlorococcus marinus (strain MIT 9312).